A 241-amino-acid polypeptide reads, in one-letter code: tRNA (guanine-N(7)-)-methyltransferase (241 aa).

S-adenosyl-L-methionine-binding residues include Glu76, Glu101, Asp128, and Asp150. Asp150 is an active-site residue. Residues Lys154, Asp186, and 219-222 contribute to the substrate site; that span reads TRYE.

The protein belongs to the class I-like SAM-binding methyltransferase superfamily. TrmB family.

The catalysed reaction is guanosine(46) in tRNA + S-adenosyl-L-methionine = N(7)-methylguanosine(46) in tRNA + S-adenosyl-L-homocysteine. The protein operates within tRNA modification; N(7)-methylguanine-tRNA biosynthesis. Its function is as follows. Catalyzes the formation of N(7)-methylguanine at position 46 (m7G46) in tRNA. The sequence is that of tRNA (guanine-N(7)-)-methyltransferase from Cereibacter sphaeroides (strain ATCC 17023 / DSM 158 / JCM 6121 / CCUG 31486 / LMG 2827 / NBRC 12203 / NCIMB 8253 / ATH 2.4.1.) (Rhodobacter sphaeroides).